A 498-amino-acid chain; its full sequence is Glycerol kinase (498 aa).

ADP is bound at residue Thr12. ATP contacts are provided by Thr12, Thr13, and Ser14. Thr12 is a binding site for sn-glycerol 3-phosphate. An ADP-binding site is contributed by Arg16. Sn-glycerol 3-phosphate-binding residues include Arg82, Glu83, and Tyr134. Residues Arg82, Glu83, and Tyr134 each contribute to the glycerol site. Position 230 is a phosphohistidine; by HPr (His230). Position 244 (Asp244) interacts with sn-glycerol 3-phosphate. Positions 244 and 245 each coordinate glycerol. ADP contacts are provided by Thr266 and Gly309. Residues Thr266, Gly309, Gln313, and Gly410 each contribute to the ATP site. ADP is bound by residues Gly410 and Asn414.

It belongs to the FGGY kinase family. As to quaternary structure, homotetramer and homodimer (in equilibrium). The phosphoenolpyruvate-dependent sugar phosphotransferase system (PTS), including enzyme I, and histidine-containing protein (HPr) are required for the phosphorylation, which leads to the activation of the enzyme.

It carries out the reaction glycerol + ATP = sn-glycerol 3-phosphate + ADP + H(+). It functions in the pathway polyol metabolism; glycerol degradation via glycerol kinase pathway; sn-glycerol 3-phosphate from glycerol: step 1/1. Activated by phosphorylation and inhibited by fructose 1,6-bisphosphate (FBP). In terms of biological role, key enzyme in the regulation of glycerol uptake and metabolism. Catalyzes the phosphorylation of glycerol to yield sn-glycerol 3-phosphate. The sequence is that of Glycerol kinase from Staphylococcus aureus (strain MRSA252).